A 148-amino-acid polypeptide reads, in one-letter code: Small ribosomal subunit protein eS19G (148 aa).

Belongs to the eukaryotic ribosomal protein eS19 family.

Elimination of the ALEP-1 gene from all somatic cells in its fully activate state may represent an alternative way to gene regulation. The sequence is that of Small ribosomal subunit protein eS19G (RPS19G) from Ascaris suum (Pig roundworm).